A 435-amino-acid chain; its full sequence is Glutamyl-tRNA reductase (435 aa).

Residues Thr-49–Arg-52, Ser-109, Glu-114–Gln-116, and Gln-120 contribute to the substrate site. The Nucleophile role is filled by Cys-50. Gly-189–Ser-194 is an NADP(+) binding site.

Belongs to the glutamyl-tRNA reductase family. As to quaternary structure, homodimer.

The catalysed reaction is (S)-4-amino-5-oxopentanoate + tRNA(Glu) + NADP(+) = L-glutamyl-tRNA(Glu) + NADPH + H(+). Its pathway is porphyrin-containing compound metabolism; protoporphyrin-IX biosynthesis; 5-aminolevulinate from L-glutamyl-tRNA(Glu): step 1/2. In terms of biological role, catalyzes the NADPH-dependent reduction of glutamyl-tRNA(Glu) to glutamate 1-semialdehyde (GSA). The protein is Glutamyl-tRNA reductase of Listeria monocytogenes serotype 4b (strain CLIP80459).